A 556-amino-acid chain; its full sequence is Insulin-like growth factor 2 mRNA-binding protein 2 (556 aa).

RRM domains lie at 3 to 76 (NKLY…YSVS) and 82 to 157 (RKIQ…YIPD). Ser11 carries the phosphoserine modification. The interval 156–188 (PDEEVSSPSPPQRAQRGDHSSREQGHAPGGTSQ) is disordered. Residues Ser162 and Ser164 each carry the phosphoserine modification. The span at 170 to 180 (QRGDHSSREQG) shows a compositional bias: basic and acidic residues. KH domains follow at residues 193-258 (DFPL…CRMI), 274-341 (EIPL…EIEI), 384-449 (QEIV…QGRI), and 466-532 (KLEA…QRKI). Position 507 is a phosphothreonine (Thr507).

The protein belongs to the RRM IMP/VICKZ family. As to quaternary structure, can form homooligomers and heterooligomers with IGF2BP1 and IGF2BP3 in an RNA-dependent manner. Interacts with HNRPD. Interacts with IGF2BP1. Interacts with ELAVL1, DHX9, HNRNPU, MATR3 and PABPC1.

It is found in the nucleus. It localises to the cytoplasm. The protein resides in the P-body. The protein localises to the stress granule. Its function is as follows. RNA-binding factor that recruits target transcripts to cytoplasmic protein-RNA complexes (mRNPs). This transcript 'caging' into mRNPs allows mRNA transport and transient storage. It also modulates the rate and location at which target transcripts encounter the translational apparatus and shields them from endonuclease attacks or microRNA-mediated degradation. Preferentially binds to N6-methyladenosine (m6A)-containing mRNAs and increases their stability. Binds to the 5'-UTR of the insulin-like growth factor 2 (IGF2) mRNAs. Binding is isoform-specific. Binds to beta-actin/ACTB and MYC transcripts. Increases MYC mRNA stability by binding to the coding region instability determinant (CRD) and binding is enhanced by m6A-modification of the CRD. The polypeptide is Insulin-like growth factor 2 mRNA-binding protein 2 (IGF2BP2) (Pongo abelii (Sumatran orangutan)).